The sequence spans 111 residues: Transcription initiation factor IIA subunit 2 (111 aa).

It belongs to the TFIIA subunit 2 family. As to quaternary structure, TFIIA is a heterodimer of the large unprocessed subunit 1 and a small subunit gamma. It was originally believed to be a heterotrimer of an alpha, a beta and a gamma subunit. Interacts with NCOA6 general coactivator. TFIIA forms a complex with TBP.

It localises to the nucleus. TFIIA is a component of the transcription machinery of RNA polymerase II and plays an important role in transcriptional activation. TFIIA in a complex with TBP mediates transcriptional activity. The chain is Transcription initiation factor IIA subunit 2 (gtf2a2) from Paralichthys olivaceus (Bastard halibut).